Reading from the N-terminus, the 200-residue chain is Recombination protein RecR (200 aa).

A C4-type zinc finger spans residues 60 to 75 (CVYCQALTEDDVCNIC). One can recognise a Toprim domain in the interval 83–177 (TKLCIIESML…KISRIGFGVP (95 aa)).

The protein belongs to the RecR family.

Functionally, may play a role in DNA repair. It seems to be involved in an RecBC-independent recombinational process of DNA repair. It may act with RecF and RecO. This chain is Recombination protein RecR, found in Francisella tularensis subsp. holarctica (strain OSU18).